The chain runs to 63 residues: Cytochrome c oxidase subunit 7C, mitochondrial (63 aa).

Residues 1-16 constitute a mitochondrion transit peptide; it reads MLGQSIRRFTTSVVRR. Topologically, residues 17-33 are mitochondrial matrix; sequence SHYEEGPGKNLPFSVEN. The residue at position 25 (lysine 25) is an N6-acetyllysine; alternate. Residue lysine 25 is modified to N6-succinyllysine; alternate. Residues 34–60 form a helical membrane-spanning segment; that stretch reads KWRLLAMMTLYFGSGFAAPFFIVRHQL. The Mitochondrial intermembrane portion of the chain corresponds to 61-63; sequence LKK.

It belongs to the cytochrome c oxidase VIIc family. Component of the cytochrome c oxidase (complex IV, CIV), a multisubunit enzyme composed of 14 subunits. The complex is composed of a catalytic core of 3 subunits MT-CO1, MT-CO2 and MT-CO3, encoded in the mitochondrial DNA, and 11 supernumerary subunits COX4I, COX5A, COX5B, COX6A, COX6B, COX6C, COX7A, COX7B, COX7C, COX8 and NDUFA4, which are encoded in the nuclear genome. The complex exists as a monomer or a dimer and forms supercomplexes (SCs) in the inner mitochondrial membrane with NADH-ubiquinone oxidoreductase (complex I, CI) and ubiquinol-cytochrome c oxidoreductase (cytochrome b-c1 complex, complex III, CIII), resulting in different assemblies (supercomplex SCI(1)III(2)IV(1) and megacomplex MCI(2)III(2)IV(2)). Interacts with RAB5IF.

Its subcellular location is the mitochondrion inner membrane. Its pathway is energy metabolism; oxidative phosphorylation. Functionally, component of the cytochrome c oxidase, the last enzyme in the mitochondrial electron transport chain which drives oxidative phosphorylation. The respiratory chain contains 3 multisubunit complexes succinate dehydrogenase (complex II, CII), ubiquinol-cytochrome c oxidoreductase (cytochrome b-c1 complex, complex III, CIII) and cytochrome c oxidase (complex IV, CIV), that cooperate to transfer electrons derived from NADH and succinate to molecular oxygen, creating an electrochemical gradient over the inner membrane that drives transmembrane transport and the ATP synthase. Cytochrome c oxidase is the component of the respiratory chain that catalyzes the reduction of oxygen to water. Electrons originating from reduced cytochrome c in the intermembrane space (IMS) are transferred via the dinuclear copper A center (CU(A)) of subunit 2 and heme A of subunit 1 to the active site in subunit 1, a binuclear center (BNC) formed by heme A3 and copper B (CU(B)). The BNC reduces molecular oxygen to 2 water molecules using 4 electrons from cytochrome c in the IMS and 4 protons from the mitochondrial matrix. This is Cytochrome c oxidase subunit 7C, mitochondrial (COX7C) from Sus scrofa (Pig).